The sequence spans 279 residues: HTH-type transcriptional activator RhaS (279 aa).

The 99-residue stretch at 175 to 273 (QALLGWLQNN…SQAPKSLRHQ (99 aa)) folds into the HTH araC/xylS-type domain. DNA-binding regions (H-T-H motif) lie at residues 192–213 (GSLADRFSLPLRTLHRQLKQHT) and 240–263 (ITTIAHACGFSDSNHFSTQFRKAF).

In terms of assembly, binds DNA as a dimer.

It is found in the cytoplasm. Functionally, activates expression of the rhaBAD and rhaT operons. In Pectobacterium carotovorum subsp. carotovorum (strain PC1), this protein is HTH-type transcriptional activator RhaS.